Reading from the N-terminus, the 269-residue chain is Formamidopyrimidine-DNA glycosylase (269 aa).

The active-site Schiff-base intermediate with DNA is the P2. Residue E3 is the Proton donor of the active site. The Proton donor; for beta-elimination activity role is filled by K57. The DNA site is built by H90, R109, and K150. The segment at 235 to 269 adopts an FPG-type zinc-finger fold; the sequence is LVYGKAGEPCPECGEPLQELKIGQRNTFFCNECQQ. R259 serves as the catalytic Proton donor; for delta-elimination activity.

This sequence belongs to the FPG family. Monomer. Zn(2+) serves as cofactor.

The enzyme catalyses Hydrolysis of DNA containing ring-opened 7-methylguanine residues, releasing 2,6-diamino-4-hydroxy-5-(N-methyl)formamidopyrimidine.. It catalyses the reaction 2'-deoxyribonucleotide-(2'-deoxyribose 5'-phosphate)-2'-deoxyribonucleotide-DNA = a 3'-end 2'-deoxyribonucleotide-(2,3-dehydro-2,3-deoxyribose 5'-phosphate)-DNA + a 5'-end 5'-phospho-2'-deoxyribonucleoside-DNA + H(+). In terms of biological role, involved in base excision repair of DNA damaged by oxidation or by mutagenic agents. Acts as a DNA glycosylase that recognizes and removes damaged bases. Has a preference for oxidized purines, such as 7,8-dihydro-8-oxoguanine (8-oxoG). Has AP (apurinic/apyrimidinic) lyase activity and introduces nicks in the DNA strand. Cleaves the DNA backbone by beta-delta elimination to generate a single-strand break at the site of the removed base with both 3'- and 5'-phosphates. The protein is Formamidopyrimidine-DNA glycosylase of Vibrio parahaemolyticus serotype O3:K6 (strain RIMD 2210633).